We begin with the raw amino-acid sequence, 77 residues long: Small ribosomal subunit protein uS17 (77 aa).

This sequence belongs to the universal ribosomal protein uS17 family. In terms of assembly, part of the 30S ribosomal subunit.

Functionally, one of the primary rRNA binding proteins, it binds specifically to the 5'-end of 16S ribosomal RNA. The chain is Small ribosomal subunit protein uS17 from Rickettsia canadensis (strain McKiel).